The sequence spans 315 residues: WD repeat domain-containing protein 83 (315 aa).

WD repeat units follow at residues 23 to 62, 65 to 104, 107 to 146, 151 to 188, 190 to 228, 231 to 272, and 275 to 313; these read CGQG…LLRT, GHGY…VVRK, GHAG…PEPV, EARD…LFSD, VGSP…LLGE, GHKN…LALA, and VGSG…AEDG.

This sequence belongs to the WD repeat MORG1 family. In terms of assembly, interacts with EGLN3/PHD3. Interacts with ERK signaling proteins MAP2K1/MEK1, MAP2K2/MEK2, LAMTOR3, ARAF/Raf-1, MAPK1/ERK2 and MAPK3/ERK1. Identified in the spliceosome C complex. Interacts with PARD6B and CRB3. Interacts strongly with GTP-bound RRAGA but not with inactive GDP-bound. Interacts with p62/SQSTM1.

Its subcellular location is the cytoplasm. The protein localises to the lysosome. It localises to the nucleus. Functionally, molecular scaffold protein for various multimeric protein complexes. Acts as a module in the assembly of a multicomponent scaffold for the ERK pathway, linking ERK responses to specific agonists. At low concentrations it enhances ERK activation, whereas high concentrations lead to the inhibition of ERK activation. Also involved in response to hypoxia by acting as a negative regulator of HIF1A/HIF-1-alpha via its interaction with EGLN3/PHD3. May promote degradation of HIF1A. May act by recruiting signaling complexes to a specific upstream activator. May also be involved in pre-mRNA splicing. Participates in tight junction development by regulating apico-basal polarity, a key step in tissue development and organization. Mechanistically, regulates the translocation of PAR6-aPKC from the cytoplasm to the apical surface by acting as an adapter between PARD6B AND CRB3. Also acts as a negative regulator of mTORC1 under nutrient-rich conditions by binding to the active Rag GTPases to inhibit mTORC1 localization to the lysosome and phosphorylation of downstream targets. This facilitates constitutive basal autophagy during nutrient availability. This is WD repeat domain-containing protein 83 (WDR83) from Homo sapiens (Human).